The following is a 357-amino-acid chain: Isopentenyl-diphosphate delta-isomerase (357 aa).

12–13 (RK) lines the substrate pocket. FMN-binding positions include Ser-70, 71–73 (SMT), Ser-101, and Asn-130. 101 to 103 (SMR) is a binding site for substrate. Gln-165 is a substrate binding site. Glu-166 provides a ligand contact to Mg(2+). FMN is bound by residues Lys-197, 289–291 (GIR), and 310–311 (AQ).

Belongs to the IPP isomerase type 2 family. Homooctamer. Dimer of tetramers. FMN is required as a cofactor. Requires NADPH as cofactor. The cofactor is Mg(2+).

It is found in the cytoplasm. It catalyses the reaction isopentenyl diphosphate = dimethylallyl diphosphate. Involved in the biosynthesis of isoprenoids. Catalyzes the 1,3-allylic rearrangement of the homoallylic substrate isopentenyl (IPP) to its allylic isomer, dimethylallyl diphosphate (DMAPP). The protein is Isopentenyl-diphosphate delta-isomerase of Chlorobaculum parvum (strain DSM 263 / NCIMB 8327) (Chlorobium vibrioforme subsp. thiosulfatophilum).